Here is a 114-residue protein sequence, read N- to C-terminus: Large ribosomal subunit protein P1 (114 aa).

A disordered region spans residues 55–114; it reads EEAAAAPAAAPAASGSDDEAAADDGDDDEEADADEAAEAEDAGDDDDEEPSGEGLGDLFG. Residues 56 to 69 show a composition bias toward low complexity; that stretch reads EAAAAPAAAPAASG. Acidic residues predominate over residues 70-105; the sequence is SDDEAAADDGDDDEEADADEAAEAEDAGDDDDEEPS.

The protein belongs to the eukaryotic ribosomal protein P1/P2 family. As to quaternary structure, part of the 50S ribosomal subunit. Homodimer, it forms part of the ribosomal stalk which helps the ribosome interact with GTP-bound translation factors. Forms a heptameric uL10/P0(P1)2(P1)2(P1)2 complex, where uL10/P0 forms an elongated spine to which the P1 dimers bind in a sequential fashion.

Functionally, forms part of the ribosomal stalk, playing a central role in the interaction of the ribosome with GTP-bound translation factors. The sequence is that of Large ribosomal subunit protein P1 from Halobacterium salinarum (strain ATCC 700922 / JCM 11081 / NRC-1) (Halobacterium halobium).